Reading from the N-terminus, the 323-residue chain is 8-oxo-dGDP phosphatase NUDT18 (323 aa).

The Nudix hydrolase domain maps to 37 to 167 (RLRKNVCYVV…DILHLVELAA (131 aa)). Leucine 58 lines the Mg(2+) pocket. A Nudix box motif is present at residues 76–97 (GRMEPGETIVEALQREVKEEAG).

It belongs to the Nudix hydrolase family. The cofactor is Mn(2+). Mg(2+) is required as a cofactor.

It catalyses the reaction 8-oxo-dGDP + H2O = 8-oxo-dGMP + phosphate + H(+). It carries out the reaction 8-oxo-dADP + H2O = 8-oxo-dAMP + phosphate + H(+). The enzyme catalyses 2-oxo-dADP + H2O = 2-oxo-dAMP + phosphate + H(+). The catalysed reaction is 8-oxo-GDP + H2O = 8-oxo-GMP + phosphate + H(+). Mediates the hydrolysis of oxidized nucleoside diphosphate derivatives. Hydrolyzes 8-oxo-7,8-dihydroguanine (8-oxo-Gua)-containing deoxyribo- and ribonucleoside diphosphates to the monophosphates. Hydrolyzes 8-oxo-dGDP and 8-oxo-GDP with the same efficiencies. Also hydrolyzes 8-OH-dADP and 2-OH-dADP. Exhibited no or minimal hydrolysis activity against 8-oxo-dGTP, 8-oxo-GTP, dGTP, GTP, dGDP and GDP. Probably removes oxidized guanine nucleotides from both the DNA and RNA precursor pools. In Homo sapiens (Human), this protein is 8-oxo-dGDP phosphatase NUDT18.